Reading from the N-terminus, the 57-residue chain is U-Asilidin(1)-Mar2a (57 aa).

An N-terminal signal peptide occupies residues 1–24 (MAPLLKLNILLLIVLICFTFHANA). 3 disulfide bridges follow: Cys-28/Cys-44, Cys-35/Cys-48, and Cys-43/Cys-53.

This sequence belongs to the asilidin-1 family. Expressed by the venom gland. Exclusively expressed in the venom thoracic glands (and not in body tissues).

Its subcellular location is the secreted. Its function is as follows. May act as a neurotoxin. The chain is U-Asilidin(1)-Mar2a from Machimus arthriticus (Breck robberfly).